Here is a 174-residue protein sequence, read N- to C-terminus: Gamma-crystallin A (174 aa).

Beta/gamma crystallin 'Greek key' domains are found at residues 2–40 (GKITFYEDRDFQGRCYNCISDCPNLRVYFSRCNSIRVDS) and 41–83 (GCWM…RIIP). The tract at residues 84–87 (HTSS) is connecting peptide. Beta/gamma crystallin 'Greek key' domains follow at residues 88–128 (HKLR…HVLE) and 129–171 (GCWV…RRVT).

This sequence belongs to the beta/gamma-crystallin family. As to quaternary structure, monomer.

Crystallins are the dominant structural components of the vertebrate eye lens. The sequence is that of Gamma-crystallin A (CRYGA) from Homo sapiens (Human).